We begin with the raw amino-acid sequence, 447 residues long: 3-phosphoshikimate 1-carboxyvinyltransferase (447 aa).

Residues Lys36, Ser37, and Arg41 each contribute to the 3-phosphoshikimate site. Residue Lys36 participates in phosphoenolpyruvate binding. Phosphoenolpyruvate-binding residues include Gly109 and Arg138. Residues Ser183, Gln185, Asp333, and Lys360 each coordinate 3-phosphoshikimate. Gln185 is a phosphoenolpyruvate binding site. The active-site Proton acceptor is Asp333. Phosphoenolpyruvate contacts are provided by Arg364 and Arg406.

The protein belongs to the EPSP synthase family. As to quaternary structure, monomer.

It is found in the cytoplasm. It catalyses the reaction 3-phosphoshikimate + phosphoenolpyruvate = 5-O-(1-carboxyvinyl)-3-phosphoshikimate + phosphate. It functions in the pathway metabolic intermediate biosynthesis; chorismate biosynthesis; chorismate from D-erythrose 4-phosphate and phosphoenolpyruvate: step 6/7. In terms of biological role, catalyzes the transfer of the enolpyruvyl moiety of phosphoenolpyruvate (PEP) to the 5-hydroxyl of shikimate-3-phosphate (S3P) to produce enolpyruvyl shikimate-3-phosphate and inorganic phosphate. The sequence is that of 3-phosphoshikimate 1-carboxyvinyltransferase from Synechocystis sp. (strain ATCC 27184 / PCC 6803 / Kazusa).